A 408-amino-acid polypeptide reads, in one-letter code: Aspartokinase 2 (408 aa).

Position 7-10 (7-10) interacts with ATP; the sequence is KFGG. 25–30 lines the substrate pocket; it reads RAIAEK. ATP is bound at residue S41. Substrate is bound by residues 47 to 49, E74, 125 to 126, 150 to 153, and S153; these read TDE, LE, and RGGS. ATP-binding positions include 173-174 and 179-184; these read TD and FTTDPR. ACT domains are found at residues 264–337 and 343–408; these read VTIY…TESK and IVGS…PSAV. Substrate is bound by residues 289–291, Q295, 354–355, 368–369, and 375–376; these read NVD, VA, LI, and SE.

Belongs to the aspartokinase family. Tetramer consisting of 2 isoforms Alpha (catalytic and regulation) and of a homodimer of 2 isoforms Beta (regulation).

It carries out the reaction L-aspartate + ATP = 4-phospho-L-aspartate + ADP. It participates in amino-acid biosynthesis; L-lysine biosynthesis via DAP pathway; (S)-tetrahydrodipicolinate from L-aspartate: step 1/4. It functions in the pathway amino-acid biosynthesis; L-methionine biosynthesis via de novo pathway; L-homoserine from L-aspartate: step 1/3. The protein operates within amino-acid biosynthesis; L-threonine biosynthesis; L-threonine from L-aspartate: step 1/5. Lysine-sensitive. Regulated by degradation in response to starvation of cells for various nutrients. Ammonium starvation induced the fastest aspartokinase II decline, followed by amino acid starvation and glucose limitation. Catalyzes the phosphorylation of the beta-carboxyl group of aspartic acid with ATP to yield 4-phospho-L-aspartate, which is involved in the branched biosynthetic pathway leading to the biosynthesis of amino acids threonine, isoleucine and methionine. This chain is Aspartokinase 2 (lysC), found in Bacillus subtilis (strain 168).